The following is a 675-amino-acid chain: Polyphosphate kinase (675 aa).

An ATP-binding site is contributed by N42. Mg(2+) is bound by residues R372 and R401. Residue H431 is the Phosphohistidine intermediate of the active site. Residues Y464, R558, and H586 each contribute to the ATP site.

Belongs to the polyphosphate kinase 1 (PPK1) family. It depends on Mg(2+) as a cofactor. An intermediate of this reaction is the autophosphorylated ppk in which a phosphate is covalently linked to a histidine residue through a N-P bond.

It carries out the reaction [phosphate](n) + ATP = [phosphate](n+1) + ADP. Catalyzes the reversible transfer of the terminal phosphate of ATP to form a long-chain polyphosphate (polyP). This is Polyphosphate kinase from Helicobacter pylori (strain ATCC 700392 / 26695) (Campylobacter pylori).